The chain runs to 72 residues: UPF0270 protein YheU (72 aa).

This sequence belongs to the UPF0270 family.

This Shigella dysenteriae serotype 1 (strain Sd197) protein is UPF0270 protein YheU.